Consider the following 142-residue polypeptide: Hemoglobin subunit alpha-A (142 aa).

In terms of domain architecture, Globin spans 2-142; the sequence is VLSAADKTNV…VGAVLTAKYR (141 aa). His-59 is an O2 binding site. His-88 is a heme b binding site.

It belongs to the globin family. As to quaternary structure, heterotetramer of two alpha chains and two beta chains. Red blood cells.

Involved in oxygen transport from the lung to the various peripheral tissues. This is Hemoglobin subunit alpha-A (HBAA) from Anas platyrhynchos platyrhynchos (Northern mallard).